The following is a 758-amino-acid chain: Protein hunchback (758 aa).

Disordered stretches follow at residues 30–51 (EPGHHLDGNSVASSPRQSPIPS) and 172–214 (EKLQ…EDMK). Polar residues predominate over residues 39-51 (SVASSPRQSPIPS). A Phosphothreonine modification is found at threonine 178. Residues serine 188, serine 207, serine 209, and serine 210 each carry the phosphoserine modification. The segment covering 198-214 (EPEKEHDQMSNSSEDMK) has biased composition (basic and acidic residues). C2H2-type zinc fingers lie at residues 240-262 (YKCKTCGVVAITKVDFWAHTRTH), 269-291 (LQCPKCPFVTEFKHHLEYHIRKH), 297-319 (FQCDKCSYTCVNKSMLNSHRKSH), and 325-349 (YRCADCDYATKYCHSFKLHLRKYGH). Disordered stretches follow at residues 365–416 (LVID…PVAT) and 513–536 (QLQQQNQQQSDNEEEEQDDEYERK). Composition is skewed to low complexity over residues 398–415 (VAAVAPQQQQSQPAQPVA) and 513–522 (QLQQQNQQQS). Positions 523–532 (DNEEEEQDDE) are enriched in acidic residues. A phosphoserine mark is found at serine 537 and serine 540. The segment at 603-695 (MTSPEQLKVP…TTSAVAAPPS (93 aa)) is disordered. A compositionally biased stretch (low complexity) spans 652-695 (ANTSASSTASSSGNSSNASSNSNGNSSSNSSSNGTTSAVAAPPS). C2H2-type zinc fingers lie at residues 705 to 727 (YECKYCDIFFKDAVLYTIHMGYH) and 733 to 757 (FKCNMCGEKCDGPVGLFVHMARNAH).

Belongs to the hunchback C2H2-type zinc-finger protein family. In embryo, expression of maternal transcript is highest in anterior region. Zygotic transcript is expressed in anterior region until the beginning of gastrulation and in posterior region until early gastrulation. After this, it is expressed in developing nervous system.

The protein resides in the nucleus. In terms of biological role, gap class segmentation protein that controls development of head structures. The sequence is that of Protein hunchback from Drosophila melanogaster (Fruit fly).